The chain runs to 406 residues: 2-epi-valiolone synthase (406 aa).

A disordered region spans residues 1–21; it reads MPSTGSTPILAHDVKSPHRGS. NAD(+)-binding positions include 105 to 108, 137 to 141, 161 to 162, lysine 174, lysine 183, and 201 to 204; these read EPSK, GVLCD, TS, and CLAT. Zn(2+)-binding residues include glutamate 216, histidine 287, and histidine 304.

It belongs to the sugar phosphate cyclases superfamily. EVS family. Requires NAD(+) as cofactor. Co(2+) is required as a cofactor. The cofactor is Zn(2+).

The enzyme catalyses D-sedoheptulose 7-phosphate = 2-epi-valiolone + phosphate. Catalyzes the conversion of sedoheptulose 7-phosphate to 2-epi-valiolone, which may serve as an alternative precursor for aminocyclitol biosynthesis. The chain is 2-epi-valiolone synthase from Stigmatella aurantiaca (strain DW4/3-1).